Consider the following 311-residue polypeptide: Ribosomal RNA small subunit methyltransferase H (311 aa).

S-adenosyl-L-methionine-binding positions include 32 to 34 (AGH), Asp52, Phe79, Asp100, and Gln107. The tract at residues 287 to 311 (TASQEELEENNRARSAKLRIAEKRK) is disordered. A compositionally biased stretch (basic residues) spans 300–311 (RSAKLRIAEKRK).

Belongs to the methyltransferase superfamily. RsmH family.

The protein localises to the cytoplasm. It catalyses the reaction cytidine(1402) in 16S rRNA + S-adenosyl-L-methionine = N(4)-methylcytidine(1402) in 16S rRNA + S-adenosyl-L-homocysteine + H(+). Specifically methylates the N4 position of cytidine in position 1402 (C1402) of 16S rRNA. This chain is Ribosomal RNA small subunit methyltransferase H, found in Bacillus subtilis (strain 168).